The primary structure comprises 107 residues: uncharacterized protein (107 aa).

This is an uncharacterized protein from Pasteurella multocida (strain Pm70).